We begin with the raw amino-acid sequence, 202 residues long: Large ribosomal subunit protein eL13 (202 aa).

The protein belongs to the eukaryotic ribosomal protein eL13 family.

The chain is Large ribosomal subunit protein eL13 (RPL13) from Nicotiana tabacum (Common tobacco).